Reading from the N-terminus, the 224-residue chain is Viral late gene transcription factor 3 (224 aa).

A zinc finger lies at 6–26 (CSGCRHNGIVSEQGYEYCIFC).

The protein belongs to the orthopoxvirus VLTF-3/OPG127 family. As to quaternary structure, interacts with the late transcription elongation factor VLTF-4/OPG110. Interacts with the late transcription factors VLTF-1/OPG093.

Functionally, acts with RNA polymerase to initiate transcription from late gene promoters. The polypeptide is Viral late gene transcription factor 3 (OPG127) (Vaccinia virus (strain Ankara) (VACV)).